The sequence spans 642 residues: Zinc finger protein 398 (642 aa).

Disordered stretches follow at residues 1–24 (MAEA…QPLP) and 198–225 (EGEH…PGIS). Positions 143–214 (VAFDDVSIYF…DQAGPEESEI (72 aa)) constitute a KRAB domain. Acidic residues predominate over residues 207–220 (AGPEESEIPTDPSE). Residue K265 forms a Glycyl lysine isopeptide (Lys-Gly) (interchain with G-Cter in SUMO2) linkage. Residues 343–364 (FSCHHCGKNLSQDMLLTHQCSH) form a C2H2-type 1; atypical zinc finger. Residues 370-392 (LPCAQCPKHFTPQADLSSTSQDH) form a C2H2-type 2; degenerate zinc finger. C2H2-type zinc fingers lie at residues 398-420 (PTCP…LRVH), 427-449 (FPCP…RRAH), 455-477 (FRCA…QRGH), 483-505 (FSCP…QMIH), 511-533 (YPCT…RRLH), 539-561 (FSCP…QRIH), and 567-590 (YPCS…RSGH). The disordered stretch occupies residues 587–615 (RSGHNGGCGGDSDPSGQPPNPPGPLITGL).

Belongs to the krueppel C2H2-type zinc-finger protein family.

Its subcellular location is the nucleus. Its function is as follows. Functions as a transcriptional activator. This chain is Zinc finger protein 398 (ZNF398), found in Homo sapiens (Human).